The sequence spans 147 residues: Lipoprotein YfjS (147 aa).

The first 20 residues, 1 to 20 (MKRKTLPLLALVATSLFLSA), serve as a signal peptide directing secretion. Residue Cys21 is the site of N-palmitoyl cysteine attachment. Cys21 is lipidated: S-diacylglycerol cysteine.

This sequence to E.coli YafY.

Its subcellular location is the cell inner membrane. In terms of biological role, does not induce degP when overexpressed unless it is mutated to resemble YafY. The protein is Lipoprotein YfjS (yfjS) of Escherichia coli (strain K12).